The following is a 698-amino-acid chain: Methionine synthase reductase (698 aa).

Positions 5–147 (LLLYATQQGQ…VVEPWIAGLW (143 aa)) constitute a Flavodoxin-like domain. 93–124 (LLGLGDSEYTYFCNGGKIIDKRLQELGARHFY) lines the FMN pocket. A hinge region spans residues 166-247 (ALPVASPASS…ASLNIPGLPP (82 aa)). 2 positions are modified to phosphoserine: Ser-171 and Ser-189. One can recognise an FAD-binding FR-type domain in the interval 271-533 (DPVFQVPISK…PRTTNSFHLP (263 aa)). Lys-291 contacts NADP(+). Residues 451–454 (RPYS) and 487–490 (GVCT) contribute to the FAD site. Residues 610-611 (SR), 624-626 (YVQ), and Asp-659 each bind NADP(+). Trp-697 provides a ligand contact to FAD.

Forms a multiprotein complex with MMACHC, MMADHC and MTR. Requires FAD as cofactor. FMN is required as a cofactor. As to expression, found in all tissues tested, particularly abundant in skeletal muscle.

It localises to the cytoplasm. The enzyme catalyses 2 methylcob(III)alamin-[methionine synthase] + 2 S-adenosyl-L-homocysteine + NADP(+) + H(+) = 2 cob(II)alamin-[methionine synthase] + 2 S-adenosyl-L-methionine + NADPH. It catalyses the reaction 2 cob(II)alamin + A + 2 H2O + 2 H(+) = 2 aquacob(III)alamin + AH2. In terms of biological role, key enzyme in methionine and folate homeostasis responsible for the reactivation of methionine synthase (MTR/MS) activity by catalyzing the reductive methylation of MTR-bound cob(II)alamin. Cobalamin (vitamin B12) forms a complex with MTR to serve as an intermediary in methyl transfer reactions that cycles between MTR-bound methylcob(III)alamin and MTR bound-cob(I)alamin forms, and occasional oxidative escape of the cob(I)alamin intermediate during the catalytic cycle leads to the inactive cob(II)alamin species. The processing of cobalamin in the cytosol occurs in a multiprotein complex composed of at least MMACHC, MMADHC, MTRR and MTR which may contribute to shuttle safely and efficiently cobalamin towards MTR in order to produce methionine. Also necessary for the utilization of methyl groups from the folate cycle, thereby affecting transgenerational epigenetic inheritance. Also acts as a molecular chaperone for methionine synthase by stabilizing apoMTR and incorporating methylcob(III)alamin into apoMTR to form the holoenzyme. Also serves as an aquacob(III)alamin reductase by reducing aquacob(III)alamin to cob(II)alamin; this reduction leads to stimulation of the conversion of apoMTR and aquacob(III)alamin to MTR holoenzyme. This chain is Methionine synthase reductase, found in Homo sapiens (Human).